Consider the following 132-residue polypeptide: Small ribosomal subunit protein uS8c (132 aa).

This sequence belongs to the universal ribosomal protein uS8 family. As to quaternary structure, part of the 30S ribosomal subunit.

It localises to the plastid. The protein resides in the chloroplast. Its function is as follows. One of the primary rRNA binding proteins, it binds directly to 16S rRNA central domain where it helps coordinate assembly of the platform of the 30S subunit. The protein is Small ribosomal subunit protein uS8c (rps8) of Calycanthus floridus var. glaucus (Eastern sweetshrub).